The following is a 1190-amino-acid chain: MSVACVLKRKTVLWQDSFSPHLKQYPEGTLNHNMPVVLTSGPVGQQQPPQPPTHSALATGPHASPVGGSMGVAGRSQDDAMVDYFFQRQHGEQLGGGGSGGGGYNNSKHRWPTGDNIHAEHQVRSMDELNHDFQALALEGRAMGEQLLTGKKFWETDDSNKDGPKGIFLGDQWRESTWGASDHSVSQPIMVQRRPGQGFHVSSEVNSVLSPRSESGGLGVSMVEYVLSSSPGDSCLRKGAFGPRDTEGDENEKVDKKNKGVYEGDKLGDLKEEADSMDKCNGLPVQNGIDGDVKDFSRTPGNCQASASEVDLLGSIQNGSEGLVQLTNNNGAKPVEDFGGIESQSVQLDPMEHVGMEPLQFDYQGNQVPVDSGAAAVGLFDYNSQQQLFQRPNALTVQQLTAAQQQQYALAAAHQQHIGMFSAGLAPAAFVPNPYIISAAPPGTDPYAAGLAAAATLGPAVVPHQYYGVTPWGVYPANLFQQQAAAAAAASNSASQQNNPQSQQGQQQVLRAGGNQRPLTPNQNQQGQQTDQLVAAAAVNSALAFGQGLAAGMPGYPMLAPAAYYDQTGALVVNTGARNGLGGPVRLVAPASVIISQSAAQAAVAAAAASANGPAGTANGPFRQLNSQQPQGQPQPQGNQNLASSSFYGNSSMNSNSQSSSLFSQSSGQPGNSSLGFGSSGSLGATLSSALGGFGTAVANSNTNSGSRRDSLTGSSDIYKRTSSSLTPIGHSFYNGLGFSSSPGPVGMPLPSQGPSHSQTPPPSLSSHGSSTSLNLGGLTNGSGRYISAAPGAEAKYRSASSASSLFSPSSTLFPSSRLRYGMSDVMPSGRSRLLEDFRNNRYPNLQLREIAGHIMEFSQDQHGSRFIQLKLERATPAERQLVFNEILQAAYQLMVDVFGNYVIQKFFEFGSLEQKLALAERIRGHVLSLALQMYGCRVIQKALEFIPPDQQVINEMVRELDGHVLKCVKDQNGNHVVQKCIECVQPQSLQFIIDAFKSQVFALSTHPYGCRVIQRILEHCLPEQTLPILEELHQHTEQLVQDQYGNYVIQHVLEHGRPEDKSKIVAEIRGNVLVLSQHKFASNVVEKCVTHASRTERAMLIDEVCTMNDGPHSALYTMMKDQYANYVVQKMIDVAEPAQRKIVMHKIRPHIATLRKYTYGKHILAKLEKYYMKNGMDLGPMCGPSNGII.

Disordered stretches follow at residues 38 to 74 (LTSG…GVAG), 491 to 531 (SNSA…QQTD), 611 to 675 (ANGP…NSSL), and 744 to 777 (GPVG…LNLG). Low complexity-rich tracts occupy residues 491 to 508 (SNSA…GQQQ), 518 to 531 (PLTP…QQTD), 628 to 675 (QQPQ…NSSL), and 765 to 777 (LSSH…LNLG). The PUM-HD domain occupies 830–1172 (GRSRLLEDFR…HILAKLEKYY (343 aa)). Pumilio repeat units lie at residues 850-885 (EIAG…LVFN), 886-921 (EILQ…ALAE), 922-959 (RIRG…EMVR), 960-995 (ELDG…FIID), 996-1031 (AFKS…PILE), 1032-1067 (ELHQ…KIVA), 1068-1103 (EIRG…MLID), and 1107-1146 (TMND…IVMH). Residues 865-869 (SRFIQ) are adenine-nucleotide binding in RNA target. Residues 901-905 (NYVIQ) form a uracil-nucleotide binding in RNA target region. The interval 937-941 (CRVIQ) is adenine-nucleotide binding in RNA target. Residues 975 to 979 (NHVVQ) are non-specific-nucleotide binding in RNA target. Residues 1011 to 1015 (CRVIQ) form an adenine-nucleotide binding in RNA target region. The uracil-nucleotide binding in RNA target stretch occupies residues 1047–1051 (NYVIQ). The interval 1083-1087 (SNVVE) is guanine-nucleotide binding in RNA target. Residues 1126–1130 (NYVVQ) are uracil-nucleotide binding in RNA target.

In terms of assembly, interacts with cpeb1-a; interacts with unphosphorylated cpeb1-a but not phosphorylated. Component of a complex with papd4, sympk, tacc3, parn, dazl and cpeb1. Phosphorylated. Phosphorylation takes place at the time of dissociation of cpeb1-a from pum1 and the translational activation of ccnb1 mRNA. Present in oocytes (at protein level).

It is found in the cytoplasm. Its subcellular location is the P-body. The protein resides in the cytoplasmic granule. Functionally, sequence-specific RNA-binding protein that acts as a post-transcriptional repressor by binding the 3'-UTR of mRNA targets. Binds to an RNA consensus sequence, the Pumilio Response Element (PRE), 5'-UGUANAUA-3', that is related to the Nanos Response Element (NRE). Mediates post-transcriptional repression of transcripts via different mechanisms: acts via direct recruitment of deadenylase complexes leading to translational inhibition and mRNA degradation. Also mediates deadenylation-independent repression by promoting accessibility of miRNAs. Acts as a post-transcriptional repressor of ccnb1 mRNA during oocyte maturation. The sequence is that of Pumilio homolog 1 from Xenopus laevis (African clawed frog).